The sequence spans 796 residues: MEAGGERFLRQRQVLLLFVFLGGSLAGSESRRYSVAEEKERGFLIANLAKDLGLRVEELAARGAQVVSKGNKQHFQLSHQTGDLLLNEKLDREELCGPTEPCILHFQILLQNPLQFVTNELRIIDVNDHSPVFFENEMHLKILESTLPGTVIPLGNAEDLDVGRNSLQNYTITPNSHFHVLTRSRRDGRKYPELVLDKALDREEQPELSLTLTALDGGSPPRSGTAQINIQVLDINDNAPEFAQPLYEVAVLENTPVYSVIVTVSASDLDTGSFGTISYAFFHASEEIRKTFQLNPITGDMQLVKYLNFEAINSYEVDIEAKDGGGLSGKSTVIVQVVDVNDNPPELTLSSVNSPIPENSGETVLAVFSVSDLDSGDNGRVMCSIENNLPFFLKPSVENFYTLVSEGALDRETRSEYNITITITDLGTPRLKTKYNITVLVSDVNDNAPAFTQTSYTLFVRENNSPALHIGSVSATDRDSGTNAQVTYSLLPPQDPHLPLSSLVSINADNGHLFALRSLDYEALQAFEFRVGATDRGSPALSSEALVRVLVLDANDNSPFVLYPLQNGSAPCTELVPRAAEPGYLVTKVVAVDGDSGQNAWLSYQLLKATEPGLFGVWAHNGEVRTARLLSERDAAKHKLAVLVKDNGEPPRSATATLHVLLVDGFSQPYLPLPEAAPAQAQADLLTVYLVVALASVSSLFLFSVLLFVAVRLCRRSRAASVGRCSVPEGPFPGHLVDVSGTGTLSQSYQYEVCLTGGSGTNEFKFLKPIIPNFVAQGAERVSEANPSFRKSFEFS.

An N-terminal signal peptide occupies residues 1-26 (MEAGGERFLRQRQVLLLFVFLGGSLA). Over 27–690 (GSESRRYSVA…AQADLLTVYL (664 aa)) the chain is Extracellular. Cadherin domains follow at residues 35-133 (VAEE…SPVF), 138-242 (MHLK…APEF), 247-347 (YEVA…PPEL), 352-451 (VNSP…APAF), and 456-561 (YTLF…SPFV). N169 carries N-linked (GlcNAc...) asparagine glycosylation. 2 N-linked (GlcNAc...) asparagine glycosylation sites follow: N418 and N436. N567 is a glycosylation site (N-linked (GlcNAc...) asparagine). Residues 568-671 (GSAPCTELVP…LVDGFSQPYL (104 aa)) enclose the Cadherin 6 domain. Residues 691–711 (VVALASVSSLFLFSVLLFVAV) traverse the membrane as a helical segment. The Cytoplasmic portion of the chain corresponds to 712 to 796 (RLCRRSRAAS…PSFRKSFEFS (85 aa)).

Its subcellular location is the cell membrane. Potential calcium-dependent cell-adhesion protein. May be involved in the establishment and maintenance of specific neuronal connections in the brain. This chain is Protocadherin beta-3 (PCDHB3), found in Pan troglodytes (Chimpanzee).